The primary structure comprises 469 residues: RuvB-like helicase 2 (469 aa).

76–83 (GPPSTGKT) provides a ligand contact to ATP.

The protein belongs to the RuvB family. May form heterododecamers with RVB1. Component of the SWR1 chromatin remodeling complex, the INO80 chromatin remodeling complex, and of the R2TP complex.

The protein localises to the nucleus. It catalyses the reaction ATP + H2O = ADP + phosphate + H(+). Its function is as follows. DNA helicase which participates in several chromatin remodeling complexes, including the SWR1 and the INO80 complexes. The SWR1 complex mediates the ATP-dependent exchange of histone H2A for the H2A variant HZT1 leading to transcriptional regulation of selected genes by chromatin remodeling. The INO80 complex remodels chromatin by shifting nucleosomes and is involved in DNA repair. Also involved in pre-rRNA processing. The sequence is that of RuvB-like helicase 2 (rvb2) from Aspergillus fumigatus (strain ATCC MYA-4609 / CBS 101355 / FGSC A1100 / Af293) (Neosartorya fumigata).